The following is a 227-amino-acid chain: Bone marrow proteoglycan (227 aa).

The N-terminal stretch at 1–16 (MKFPLLLALLVGGAFA) is a signal peptide. A propeptide spans 17–110 (LHLSSEASDS…TSLMGDSGFK (94 aa)) (acidic). Residues 21–105 (SEASDSKSPL…KEEDTTSLMG (85 aa)) are disordered. O-linked (GalNAc...) serine glycosylation occurs at serine 24. Basic and acidic residues predominate over residues 34-46 (SLPREAEISRPEV). Over residues 58–70 (LEEEEEEEEEEGS) the composition is skewed to acidic residues. The O-linked (Xyl...) (chondroitin sulfate) serine glycan is linked to serine 70. The region spanning 128–227 (LVCRSCYRGT…GKRRPFICAY (100 aa)) is the C-type lectin domain. Cystine bridges form between cysteine 130–cysteine 225 and cysteine 202–cysteine 217.

Nitrated.

It localises to the secreted. Cytotoxin and helminthotoxin. MBP also induces non-cytolytic histamine release from basophils. It is involved in antiparasitic defense mechanisms and immune hypersensitivity reactions. This chain is Bone marrow proteoglycan (Prg2), found in Rattus norvegicus (Rat).